A 392-amino-acid chain; its full sequence is Selenide, water dikinase 1 (392 aa).

Serine 2 carries the post-translational modification N-acetylserine. Cysteine 31 is an active-site residue. Residues lysine 32, 67–69 (GMD), aspartate 87, aspartate 110, and 161–164 (GGQT) contribute to the ATP site. Aspartate 69 contacts Mg(2+). Aspartate 110 contacts Mg(2+). Aspartate 265 is a binding site for Mg(2+).

Belongs to the selenophosphate synthase 1 family. Class II subfamily. In terms of assembly, homodimer. Heterodimer with isoform 3. Homodimer. Heterodimer with isoform 4. As to quaternary structure, homodimer. Heterodimer with isoform 1. In terms of assembly, homodimer. Heterodimer with isoform 2. Mg(2+) serves as cofactor. In terms of tissue distribution, gradually expressed during the cell cycle until G2/M phase and then decreases. As to expression, gradually expressed during the cell cycle until S phase and then decreases.

The protein resides in the cell membrane. It is found in the nucleus membrane. The protein localises to the cytoplasm. It carries out the reaction hydrogenselenide + ATP + H2O = selenophosphate + AMP + phosphate + 2 H(+). With respect to regulation, activated by phosphate ions and by potassium ions. Synthesizes selenophosphate from selenide and ATP. The sequence is that of Selenide, water dikinase 1 (SEPHS1) from Homo sapiens (Human).